Here is a 507-residue protein sequence, read N- to C-terminus: UDP-N-acetylmuramoyl-L-alanyl-D-glutamate--2,6-diaminopimelate ligase (507 aa).

Serine 32 serves as a coordination point for UDP-N-acetyl-alpha-D-muramoyl-L-alanyl-D-glutamate. 117–123 (GTNGKTT) is a binding site for ATP. UDP-N-acetyl-alpha-D-muramoyl-L-alanyl-D-glutamate is bound by residues 159–160 (TT), serine 186, glutamine 192, and arginine 194. Lysine 226 carries the N6-carboxylysine modification. Residues arginine 400, 424–427 (DNPR), glycine 475, and glutamate 479 each bind meso-2,6-diaminopimelate. Positions 424–427 (DNPR) match the Meso-diaminopimelate recognition motif motif.

The protein belongs to the MurCDEF family. MurE subfamily. Mg(2+) serves as cofactor. Post-translationally, carboxylation is probably crucial for Mg(2+) binding and, consequently, for the gamma-phosphate positioning of ATP.

Its subcellular location is the cytoplasm. The catalysed reaction is UDP-N-acetyl-alpha-D-muramoyl-L-alanyl-D-glutamate + meso-2,6-diaminopimelate + ATP = UDP-N-acetyl-alpha-D-muramoyl-L-alanyl-gamma-D-glutamyl-meso-2,6-diaminopimelate + ADP + phosphate + H(+). Its pathway is cell wall biogenesis; peptidoglycan biosynthesis. Its function is as follows. Catalyzes the addition of meso-diaminopimelic acid to the nucleotide precursor UDP-N-acetylmuramoyl-L-alanyl-D-glutamate (UMAG) in the biosynthesis of bacterial cell-wall peptidoglycan. This Prochlorococcus marinus (strain MIT 9313) protein is UDP-N-acetylmuramoyl-L-alanyl-D-glutamate--2,6-diaminopimelate ligase.